The sequence spans 364 residues: 1-acyl-sn-glycerol-3-phosphate acyltransferase epsilon (364 aa).

The next 2 helical transmembrane spans lie at 15–35 (LLPS…WGVW) and 61–81 (MVLF…GDLP). Positions 93-98 (HQSTVD) match the HXXXXD motif motif. Residues 344-364 (LYVNTWIYGTLLGCLWVTIKA) form a helical membrane-spanning segment.

Belongs to the 1-acyl-sn-glycerol-3-phosphate acyltransferase family. Widely expressed.

Its subcellular location is the endoplasmic reticulum membrane. The protein localises to the nucleus envelope. It localises to the mitochondrion. It carries out the reaction a 1-acyl-sn-glycero-3-phosphate + an acyl-CoA = a 1,2-diacyl-sn-glycero-3-phosphate + CoA. The catalysed reaction is 1-(9Z-octadecenoyl)-sn-glycero-3-phosphate + tetradecanoyl-CoA = 1-(9Z)-octadecenoyl-2-tetradecanoyl-sn-glycero-3-phosphate + CoA. It catalyses the reaction pentadecanoyl-CoA + 1-(9Z-octadecenoyl)-sn-glycero-3-phosphate = 1-(9Z)-octadecenoyl-2-pentadecanoyl-sn-glycero-3-phosphate + CoA. The enzyme catalyses 1-(9Z-octadecenoyl)-sn-glycero-3-phosphate + octadecanoyl-CoA = 1-(9Z-octadecenoyl)-2-octadecanoyl-sn-glycero-3-phosphate + CoA. It carries out the reaction nonadecanoyl-CoA + 1-(9Z-octadecenoyl)-sn-glycero-3-phosphate = 1-(9Z)-octadecenoyl-2-nonadecanoyl-sn-glycero-3-phosphate + CoA. The catalysed reaction is 1-(9Z-octadecenoyl)-sn-glycero-3-phosphoethanolamine + (9Z)-octadecenoyl-CoA = 1,2-di-(9Z-octadecenoyl)-sn-glycero-3-phosphoethanolamine + CoA. It catalyses the reaction 1-(9Z-octadecenoyl)-sn-glycero-3-phosphocholine + (9Z)-octadecenoyl-CoA = 1,2-di-(9Z-octadecenoyl)-sn-glycero-3-phosphocholine + CoA. The enzyme catalyses 1-(9Z-octadecenoyl)-sn-glycero-3-phospho-(1D-myo-inositol) + (5Z,8Z,11Z,14Z)-eicosatetraenoyl-CoA = 1-(9Z-octadecenoyl)-2-(5Z,8Z,11Z,14Z-eicosatetraenoyl)-sn-glycero-3-phospho-1D-myo-inositol + CoA. It carries out the reaction 1-(9Z-octadecenoyl)-sn-glycero-3-phospho-L-serine + (9Z)-octadecenoyl-CoA = 1,2-di-(9Z)-octadecenoyl-sn-glycero-3-phospho-L-serine + CoA. The catalysed reaction is 1-(9Z-octadecenoyl)-sn-glycero-3-phospho-L-serine + (5Z,8Z,11Z,14Z)-eicosatetraenoyl-CoA = 1-(9Z-octadecenoyl)-2-(5Z,8Z,11Z,14Z-eicosatetraenoyl)-sn-glycero-3-phospho-L-serine + CoA. It catalyses the reaction 1-hexadecanoyl-sn-glycero-3-phosphate + (9Z)-octadecenoyl-CoA = 1-hexadecanoyl-2-(9Z-octadecenoyl)-sn-glycero-3-phosphate + CoA. The enzyme catalyses 1-heptadecanoyl-sn-glycero-3-phosphate + (9Z)-octadecenoyl-CoA = 1-heptadecanoyl-2-(9Z)-octadecenoyl-sn-glycero-3-phosphate + CoA. It carries out the reaction 1-(5Z,8Z,11Z,14Z-eicosatetraenoyl)-sn-glycero-3-phosphate + (9Z)-octadecenoyl-CoA = 1-(5Z,8Z,11Z,14Z)-eicosatetraenoyl-2-(9Z)-octadecenoyl-sn-glycero-3-phosphate + CoA. The catalysed reaction is 1-octadecanoyl-sn-glycero-3-phosphate + (9Z)-octadecenoyl-CoA = 1-octadecanoyl-2-(9Z-octadecenoyl)-sn-glycero-3-phosphate + CoA. It catalyses the reaction 1-(9Z-octadecenoyl)-sn-glycero-3-phosphate + (5Z,8Z,11Z,14Z)-eicosatetraenoyl-CoA = 1-(9Z)-octadecenoyl-2-(5Z,8Z,11Z,14Z)-eicosatetraenoyl-sn-glycero-3-phosphate + CoA. The enzyme catalyses heptadecanoyl-CoA + 1-(9Z-octadecenoyl)-sn-glycero-3-phosphate = 1-(9Z)-octadecenoyl-2-heptadecanoyl-sn-glycero-3-phosphate + CoA. It carries out the reaction 1-(9Z-octadecenoyl)-sn-glycero-3-phosphocholine + (5Z,8Z,11Z,14Z)-eicosatetraenoyl-CoA = 1-(9Z)-octadecenoyl-2-(5Z,8Z,11Z,14Z)-icosatetraenoyl-sn-glycero-3-phosphocholine + CoA. The catalysed reaction is 1-(9Z-octadecenoyl)-sn-glycero-3-phosphate + (9Z)-octadecenoyl-CoA = 1,2-di-(9Z-octadecenoyl)-sn-glycero-3-phosphate + CoA. It catalyses the reaction 1-(9Z-octadecenoyl)-sn-glycero-3-phosphate + hexadecanoyl-CoA = 1-hexadecanoyl-2-(9Z-octadecenoyl)-sn-glycero-3-phosphate + CoA. It functions in the pathway phospholipid metabolism; CDP-diacylglycerol biosynthesis; CDP-diacylglycerol from sn-glycerol 3-phosphate: step 2/3. Functionally, converts 1-acyl-sn-glycerol-3-phosphate (lysophosphatidic acid or LPA) into 1,2-diacyl-sn-glycerol-3-phosphate (phosphatidic acid or PA) by incorporating an acyl moiety at the sn-2 position of the glycerol backbone. Acts on LPA containing saturated or unsaturated fatty acids C15:0-C20:4 at the sn-1 position using C18:1-CoA as the acyl donor. Also acts on lysophosphatidylethanolamine using oleoyl-CoA, but not arachidonoyl-CoA, and lysophosphatidylinositol using arachidonoyl-CoA, but not oleoyl-CoA. Activity toward lysophosphatidylglycerol not detectable. This chain is 1-acyl-sn-glycerol-3-phosphate acyltransferase epsilon (AGPAT5), found in Homo sapiens (Human).